Here is a 119-residue protein sequence, read N- to C-terminus: uncharacterized protein (119 aa).

Residues 64-119 are disordered; that stretch reads SAPLGLKEVQKKSNEGLNEVQGAADINKQKRPANSQDSSSVEGDIQNFLEKVTGKN. Residues 95–104 show a composition bias toward polar residues; the sequence is PANSQDSSSV.

This is an uncharacterized protein from Nostoc sp. (strain PCC 7120 / SAG 25.82 / UTEX 2576).